A 695-amino-acid polypeptide reads, in one-letter code: DNA ligase (695 aa).

Residues 36-40 (DADYD), 85-86 (SL), and glutamate 123 each bind NAD(+). Residue lysine 125 is the N6-AMP-lysine intermediate of the active site. Positions 146, 182, 318, and 342 each coordinate NAD(+). 4 residues coordinate Zn(2+): cysteine 436, cysteine 439, cysteine 454, and cysteine 460. The BRCT domain maps to 617–695 (LQSGDLAGKT…EDGLKALLSQ (79 aa)).

It belongs to the NAD-dependent DNA ligase family. LigA subfamily. Mg(2+) serves as cofactor. The cofactor is Mn(2+).

The enzyme catalyses NAD(+) + (deoxyribonucleotide)n-3'-hydroxyl + 5'-phospho-(deoxyribonucleotide)m = (deoxyribonucleotide)n+m + AMP + beta-nicotinamide D-nucleotide.. In terms of biological role, DNA ligase that catalyzes the formation of phosphodiester linkages between 5'-phosphoryl and 3'-hydroxyl groups in double-stranded DNA using NAD as a coenzyme and as the energy source for the reaction. It is essential for DNA replication and repair of damaged DNA. The polypeptide is DNA ligase (Bordetella avium (strain 197N)).